A 1577-amino-acid chain; its full sequence is Disco-interacting protein 2 homolog B-A (1577 aa).

One can recognise a DMAP1-binding domain in the interval 7-124; sequence DLAALPKEVR…PMPTKRRSAF (118 aa). Disordered stretches follow at residues 109–148, 173–204, 217–239, and 253–273; these read EEKM…GSLR, VQGS…QGQT, DTNS…DRNS, and SRGQ…AHSR. Polar residues predominate over residues 124 to 140; the sequence is FVQSPAENCTPPDTSSA. The segment covering 176 to 187 has biased composition (low complexity); the sequence is SSTSSSASSTLS. A compositionally biased stretch (polar residues) spans 217–236; the sequence is DTNSSSGSVPPDVTSTAPQD.

Belongs to the DIP2 family.

Its subcellular location is the cell projection. It localises to the dendrite. The protein localises to the axon. It is found in the perikaryon. Its function is as follows. Negatively regulates axonal outgrowth and is essential for normal synaptic transmission. Not required for regulation of axon polarity. Promotes acetylation of alpha-tubulin. This chain is Disco-interacting protein 2 homolog B-A (dip2ba), found in Danio rerio (Zebrafish).